The sequence spans 259 residues: NH(3)-dependent NAD(+) synthetase (259 aa).

ATP is bound at residue 33–40 (GLSGGIDS). Asp-39 serves as a coordination point for Mg(2+). Arg-119 contributes to the deamido-NAD(+) binding site. Thr-139 contacts ATP. A Mg(2+)-binding site is contributed by Glu-144. Deamido-NAD(+) contacts are provided by Lys-152 and Asp-159. Residues Lys-168 and Ser-190 each coordinate ATP. Residue 249–250 (HK) participates in deamido-NAD(+) binding.

This sequence belongs to the NAD synthetase family. Homodimer.

It carries out the reaction deamido-NAD(+) + NH4(+) + ATP = AMP + diphosphate + NAD(+) + H(+). Its pathway is cofactor biosynthesis; NAD(+) biosynthesis; NAD(+) from deamido-NAD(+) (ammonia route): step 1/1. Catalyzes the ATP-dependent amidation of deamido-NAD to form NAD. Uses ammonia as a nitrogen source. The sequence is that of NH(3)-dependent NAD(+) synthetase from Methanocaldococcus jannaschii (strain ATCC 43067 / DSM 2661 / JAL-1 / JCM 10045 / NBRC 100440) (Methanococcus jannaschii).